Here is a 468-residue protein sequence, read N- to C-terminus: 6-phospho-beta-galactosidase (468 aa).

The D-galactose 6-phosphate site is built by glutamine 19, histidine 116, asparagine 159, glutamate 160, and asparagine 297. Glutamate 160 serves as the catalytic Proton donor. Glutamate 375 acts as the Nucleophile in catalysis. D-galactose 6-phosphate contacts are provided by serine 428, tryptophan 429, lysine 435, and tyrosine 437.

The protein belongs to the glycosyl hydrolase 1 family.

The catalysed reaction is a 6-phospho-beta-D-galactoside + H2O = D-galactose 6-phosphate + an alcohol. It participates in carbohydrate metabolism; lactose degradation; D-galactose 6-phosphate and beta-D-glucose from lactose 6-phosphate: step 1/1. In Streptococcus uberis (strain ATCC BAA-854 / 0140J), this protein is 6-phospho-beta-galactosidase.